The following is a 476-amino-acid chain: Acyl-lipid omega-13 desaturase (476 aa).

One can recognise a Cytochrome b5 heme-binding domain in the interval 10–75 (GPALPSIPHQ…HLRVLERFRV (66 aa)). The heme site is built by H37 and H60. The next 2 membrane-spanning stretches (helical) occupy residues 146–166 (PFVILHCLHVVGLIWSMKLWW) and 168–188 (GAFISAFILPYFLWVLCAAMV). The short motif at 189 to 193 (HDGGH) is the Histidine box-1 element. The Histidine box-2 motif lies at 224–229 (HNILHH). The next 3 helical transmembrane spans lie at 267 to 287 (FFSHLIMYNFAHIGLTMISPL), 315 to 335 (YHSTVMLQLVTVGAFYITPFL), and 343 to 363 (LLLTLLPTFMMSVAFMVIAQV). The short motif at 410 to 414 (QSLHH) is the Histidine box-3 element.

The protein belongs to the fatty acid desaturase type 1 family.

Its subcellular location is the membrane. The catalysed reaction is a (9Z,12Z)-octadecadienoyl-containing glycerolipid + 2 Fe(II)-[cytochrome b5] + O2 + 2 H(+) = a (5Z,9Z,12Z)-octadecatrienoyl-containing glycerolipid + 2 Fe(III)-[cytochrome b5] + 2 H2O. The enzyme catalyses (9Z,12Z,15Z)-octadecatrienoyl-containing glycerolipid + 2 Fe(II)-[cytochrome b5] + O2 + 2 H(+) = a (5Z,9Z,12Z,15Z)-octadecatetraenoyl-containing glycerolipid + 2 Fe(III)-[cytochrome b5] + 2 H2O. It participates in lipid metabolism; polyunsaturated fatty acid biosynthesis. In terms of biological role, front-end desaturase having a omega-13 desaturase activity for omega-9 unsaturated C18/C20 fatty acids. Strong substrate preferences for linoleic acid and alpha-linolenic acid for the production of pinolenic and coniferonic acids respectively. No desaturase activity for dihomo gamma-linolenic acid and eicosatertraenoic acid. The chain is Acyl-lipid omega-13 desaturase from Chlamydomonas reinhardtii (Chlamydomonas smithii).